The chain runs to 344 residues: Methionine import ATP-binding protein MetN (344 aa).

The 240-residue stretch at 2 to 241 folds into the ABC transporter domain; the sequence is IEINRVNKVF…PKTELARKFI (240 aa). 38–45 contacts ATP; that stretch reads GSSGAGKS.

The protein belongs to the ABC transporter superfamily. Methionine importer (TC 3.A.1.24) family. In terms of assembly, the complex is composed of two ATP-binding proteins (MetN), two transmembrane proteins (MetI) and a solute-binding protein (MetQ).

The protein localises to the cell inner membrane. It carries out the reaction L-methionine(out) + ATP + H2O = L-methionine(in) + ADP + phosphate + H(+). The catalysed reaction is D-methionine(out) + ATP + H2O = D-methionine(in) + ADP + phosphate + H(+). Part of the ABC transporter complex MetNIQ involved in methionine import. Responsible for energy coupling to the transport system. The protein is Methionine import ATP-binding protein MetN of Photobacterium profundum (strain SS9).